The chain runs to 147 residues: Mucoricin (147 aa).

Residues 4–143 form the Ricin B-type lectin domain; that stretch reads EEGRLFFIKS…VSANQRWELV (140 aa).

This sequence belongs to the ribosome-inactivating protein family. Type 1 RIP subfamily.

It is found in the secreted. The catalysed reaction is Endohydrolysis of the N-glycosidic bond at one specific adenosine on the 28S rRNA.. N-glycosylase that inhibits protein synthesis in the host by depurinating ribosomal rRNA, and thus acts as a ribosomal inactivating protein (RIP). Promotes vascular permeability in the host and induces necrosis and apoptosis of host alveolar epithelial cells. The polypeptide is Mucoricin (Rhizopus delemar (strain RA 99-880 / ATCC MYA-4621 / FGSC 9543 / NRRL 43880) (Mucormycosis agent)).